The sequence spans 576 residues: Glucoamylase ARB_02327-1 (576 aa).

An N-terminal signal peptide occupies residues 1–20 (MGLASTVSLALLGLCSLARA). Trp-141 is a substrate binding site. N-linked (GlcNAc...) asparagine glycosylation is found at Asn-168 and Asn-192. The active-site Proton acceptor is Asp-197. Glu-200 acts as the Proton donor in catalysis. 2 cysteine pairs are disulfide-bonded: Cys-243-Cys-470 and Cys-285-Cys-293. Residues 477–576 (GSGGDTVAVT…GSFTQNDTWR (100 aa)) form the CBM20 domain. The segment at 552–576 (TWESDPNRSITTSASGSFTQNDTWR) is disordered. 2 N-linked (GlcNAc...) asparagine glycosylation sites follow: Asn-558 and Asn-572.

This sequence belongs to the glycosyl hydrolase 15 family.

The protein localises to the secreted. The catalysed reaction is Hydrolysis of terminal (1-&gt;4)-linked alpha-D-glucose residues successively from non-reducing ends of the chains with release of beta-D-glucose.. This Schizophyllum commune (strain H4-8 / FGSC 9210) (Split gill fungus) protein is Glucoamylase ARB_02327-1.